Reading from the N-terminus, the 192-residue chain is Large ribosomal subunit protein uL18 (192 aa).

This sequence belongs to the universal ribosomal protein uL18 family. Part of the 50S ribosomal subunit. Contacts the 5S and 23S rRNAs.

This is one of the proteins that bind and probably mediate the attachment of the 5S RNA into the large ribosomal subunit, where it forms part of the central protuberance. In Methanothermobacter thermautotrophicus (strain ATCC 29096 / DSM 1053 / JCM 10044 / NBRC 100330 / Delta H) (Methanobacterium thermoautotrophicum), this protein is Large ribosomal subunit protein uL18.